The sequence spans 122 residues: Small ribosomal subunit protein uS13 (122 aa).

The tract at residues 94 to 122 (LSLPVRGQRTKTNSRTRKGKRKTVAGKKK) is disordered. Residues 101 to 122 (QRTKTNSRTRKGKRKTVAGKKK) show a composition bias toward basic residues.

This sequence belongs to the universal ribosomal protein uS13 family. Part of the 30S ribosomal subunit. Forms a loose heterodimer with protein S19. Forms two bridges to the 50S subunit in the 70S ribosome.

Located at the top of the head of the 30S subunit, it contacts several helices of the 16S rRNA. In the 70S ribosome it contacts the 23S rRNA (bridge B1a) and protein L5 of the 50S subunit (bridge B1b), connecting the 2 subunits; these bridges are implicated in subunit movement. Contacts the tRNAs in the A and P-sites. This Chlamydia trachomatis serovar A (strain ATCC VR-571B / DSM 19440 / HAR-13) protein is Small ribosomal subunit protein uS13.